Consider the following 490-residue polypeptide: Protein nucleotidyltransferase YdiU (490 aa).

Positions 94, 96, 97, 117, 129, 130, 180, and 187 each coordinate ATP. Aspartate 256 serves as the catalytic Proton acceptor. Mg(2+)-binding residues include asparagine 257 and aspartate 266. Position 266 (aspartate 266) interacts with ATP.

This sequence belongs to the SELO family. Mg(2+) serves as cofactor. The cofactor is Mn(2+).

The enzyme catalyses L-seryl-[protein] + ATP = 3-O-(5'-adenylyl)-L-seryl-[protein] + diphosphate. It catalyses the reaction L-threonyl-[protein] + ATP = 3-O-(5'-adenylyl)-L-threonyl-[protein] + diphosphate. The catalysed reaction is L-tyrosyl-[protein] + ATP = O-(5'-adenylyl)-L-tyrosyl-[protein] + diphosphate. It carries out the reaction L-histidyl-[protein] + UTP = N(tele)-(5'-uridylyl)-L-histidyl-[protein] + diphosphate. The enzyme catalyses L-seryl-[protein] + UTP = O-(5'-uridylyl)-L-seryl-[protein] + diphosphate. It catalyses the reaction L-tyrosyl-[protein] + UTP = O-(5'-uridylyl)-L-tyrosyl-[protein] + diphosphate. In terms of biological role, nucleotidyltransferase involved in the post-translational modification of proteins. It can catalyze the addition of adenosine monophosphate (AMP) or uridine monophosphate (UMP) to a protein, resulting in modifications known as AMPylation and UMPylation. The sequence is that of Protein nucleotidyltransferase YdiU from Clostridium perfringens (strain ATCC 13124 / DSM 756 / JCM 1290 / NCIMB 6125 / NCTC 8237 / Type A).